The following is a 173-amino-acid chain: Small ribosomal subunit protein uS5 (173 aa).

The region spanning 18-81 is the S5 DRBM domain; sequence YVEKLVKLNR…EKAKANMVTF (64 aa).

It belongs to the universal ribosomal protein uS5 family. In terms of assembly, part of the 30S ribosomal subunit. Contacts proteins S4 and S8.

In terms of biological role, with S4 and S12 plays an important role in translational accuracy. Functionally, located at the back of the 30S subunit body where it stabilizes the conformation of the head with respect to the body. In Treponema denticola (strain ATCC 35405 / DSM 14222 / CIP 103919 / JCM 8153 / KCTC 15104), this protein is Small ribosomal subunit protein uS5.